The following is a 123-amino-acid chain: MTTITPESLPRHELLGLHARVAADTDQSRVGIAGRVVDETMQTVVLRTASGVAQVPKKGATFEFRLTDEAAAPDNGVGTAFKPAGGETRQTTGESVAYVTVDGGRLLSRPERRSENGVDSKWR.

Residues 73-93 form a disordered region; sequence PDNGVGTAFKPAGGETRQTTG.

It belongs to the eukaryotic/archaeal RNase P protein component 1 family. Consists of a catalytic RNA component and at least 4-5 protein subunits.

Its subcellular location is the cytoplasm. It carries out the reaction Endonucleolytic cleavage of RNA, removing 5'-extranucleotides from tRNA precursor.. Its function is as follows. Part of ribonuclease P, a protein complex that generates mature tRNA molecules by cleaving their 5'-ends. In Halobacterium salinarum (strain ATCC 29341 / DSM 671 / R1), this protein is Ribonuclease P protein component 1.